The chain runs to 81 residues: MSHSVKIYDTCIGCTQCVRACPTDVLEMIPWDRCKAKQIASAPRTEDCVGCKRCESACPTDFLSVRVYLGHETTRSMGLTY.

4Fe-4S ferredoxin-type domains are found at residues 2–31 (SHSV…MIPW) and 39–68 (IASA…VRVY). Residues C11, C14, C17, C21, C48, C51, C54, and C58 each contribute to the [4Fe-4S] cluster site.

As to quaternary structure, the eukaryotic PSI reaction center is composed of at least 11 subunits. Requires [4Fe-4S] cluster as cofactor.

Its subcellular location is the plastid thylakoid membrane. It catalyses the reaction reduced [plastocyanin] + hnu + oxidized [2Fe-2S]-[ferredoxin] = oxidized [plastocyanin] + reduced [2Fe-2S]-[ferredoxin]. In terms of biological role, apoprotein for the two 4Fe-4S centers FA and FB of photosystem I (PSI); essential for photochemical activity. FB is the terminal electron acceptor of PSI, donating electrons to ferredoxin. The C-terminus interacts with PsaA/B/D and helps assemble the protein into the PSI complex. Required for binding of PsaD and PsaE to PSI. PSI is a plastocyanin-ferredoxin oxidoreductase, converting photonic excitation into a charge separation, which transfers an electron from the donor P700 chlorophyll pair to the spectroscopically characterized acceptors A0, A1, FX, FA and FB in turn. This chain is Photosystem I iron-sulfur center, found in Cuscuta reflexa (Southern Asian dodder).